The chain runs to 504 residues: Terminase, large subunit (504 aa).

Residues 1 to 204 (MTRGERVIAF…LSIWIDDAVK (204 aa)) form an ATPase activity region. The short motif at 54–61 (IARKNGKT) is the Walker A motif element. The short motif at 149 to 154 (LAILDE) is the Walker B motif element. Residues 326-415 (FPFFWTPQKT…LPLVEFGQGF (90 aa)) are nuclease activity. Mg(2+) is bound at residue D471.

This sequence belongs to the Hendrixvirinae large terminase family. In terms of assembly, homopentamer; forms a ring-like structure through which genomic DNA is translocated into the capsid. Interacts with the terminase small subunit; the active complex is composed of a pentamer ring of terminase large subunits and a nonamer ring of terminase small subunits. Interacts with the portal protein; this interaction allows the packaging of viral DNA. The cofactor is Mg(2+). Mn(2+) is required as a cofactor.

Inhibited by zinc. Its function is as follows. The terminase large subunit acts as an ATP driven molecular motor necessary for viral DNA translocation into empty capsids and as an endonuclease that cuts the viral genome from the concetamer to initiate and to end a packaging reaction. The terminase lies at a unique vertex of the procapsid and is composed of two subunits, a small terminase subunit involved in viral DNA recognition (packaging sequence), and a large terminase subunit possessing endonucleolytic and ATPase activities. Both terminase subunits heterooligomerize and are docked on the portal protein to form the packaging machine. Packaging initiates by TerS recognizing the packaging sequence in the viral DNA. The nuclease activity of TerL cuts the viral DNA and the terminase-DNA complex binds to the portal of a procapsid shell. DNA is translocated into the capsid, powered by the packaging ATPase in TerL, which continues until the next site is encountered at which point the motor stops and again cuts the DNA to release the nucleocapsid filled with a unit-length genome ('unit length' packaging). The chain is Terminase, large subunit (2) from Escherichia coli (Bacteriophage HK97).